The following is a 765-amino-acid chain: Multifunctional tryptophan biosynthesis protein (765 aa).

The region spanning 2-196 (ATLLIDNYDS…LSLRGGNWDE (195 aa)) is the Glutamine amidotransferase type-1 domain. Position 53-55 (53-55 (GPG)) interacts with L-glutamine. The active-site Nucleophile; for GATase activity is the cysteine 81. Residues glutamine 85 and 131–132 (SL) each bind L-glutamine. Catalysis depends on for GATase activity residues histidine 170 and glutamate 172. The tract at residues 231–494 (TILSRIYAQR…NLKEFVAELL (264 aa)) is indole-3-glycerol phosphate synthase. The tract at residues 512–765 (QVKICGISSV…VEKAKSINLQ (254 aa)) is N-(5'-phosphoribosyl)anthranilate isomerase.

It carries out the reaction N-(5-phospho-beta-D-ribosyl)anthranilate = 1-(2-carboxyphenylamino)-1-deoxy-D-ribulose 5-phosphate. It catalyses the reaction 1-(2-carboxyphenylamino)-1-deoxy-D-ribulose 5-phosphate + H(+) = (1S,2R)-1-C-(indol-3-yl)glycerol 3-phosphate + CO2 + H2O. The catalysed reaction is chorismate + L-glutamine = anthranilate + pyruvate + L-glutamate + H(+). It functions in the pathway amino-acid biosynthesis; L-tryptophan biosynthesis; L-tryptophan from chorismate: step 1/5. Its pathway is amino-acid biosynthesis; L-tryptophan biosynthesis; L-tryptophan from chorismate: step 3/5. The protein operates within amino-acid biosynthesis; L-tryptophan biosynthesis; L-tryptophan from chorismate: step 4/5. Its function is as follows. Trifunctional enzyme bearing the Gln amidotransferase (GATase) domain of anthranilate synthase, indole-glycerolphosphate synthase, and phosphoribosylanthranilate isomerase activities. This is Multifunctional tryptophan biosynthesis protein (trp1) from Phycomyces blakesleeanus.